The primary structure comprises 357 residues: 3-isopropylmalate dehydrogenase (357 aa).

Position 75–88 (Gly75–Glu88) interacts with NAD(+). Arg96, Arg106, Arg134, and Asp222 together coordinate substrate. Asp222, Asp246, and Asp250 together coordinate Mg(2+). Gly279–Asn291 provides a ligand contact to NAD(+).

The protein belongs to the isocitrate and isopropylmalate dehydrogenases family. LeuB type 1 subfamily. In terms of assembly, homodimer. It depends on Mg(2+) as a cofactor. The cofactor is Mn(2+).

It is found in the cytoplasm. The catalysed reaction is (2R,3S)-3-isopropylmalate + NAD(+) = 4-methyl-2-oxopentanoate + CO2 + NADH. Its pathway is amino-acid biosynthesis; L-leucine biosynthesis; L-leucine from 3-methyl-2-oxobutanoate: step 3/4. In terms of biological role, catalyzes the oxidation of 3-carboxy-2-hydroxy-4-methylpentanoate (3-isopropylmalate) to 3-carboxy-4-methyl-2-oxopentanoate. The product decarboxylates to 4-methyl-2 oxopentanoate. This is 3-isopropylmalate dehydrogenase from Moorella thermoacetica (strain ATCC 39073 / JCM 9320).